The sequence spans 1403 residues: Nidogen-2 (1403 aa).

The first 30 residues, 1-30 (MFRDPTAGWLTPPSPLSLLVMLLLLSRVGA), serve as a signal peptide directing secretion. Residues 108–274 (PFLADIDTSH…GVWAFHIGSR (167 aa)) form the NIDO domain. Residues 323–403 (EDVEYPPVEP…KQGRPVGEGE (81 aa)) are disordered. O-linked (Xyl...) (chondroitin sulfate) serine glycans are attached at residues Ser-386 and Ser-475. Over residues 386–395 (SASLDPQTKQ) the composition is skewed to polar residues. Residues 507–547 (NLETCEHSHGRCSQHAFCTDYTTGFCCHCQSRFYGNGKHCL) enclose the EGF-like 1 domain. Disulfide bonds link Cys-511–Cys-524, Cys-518–Cys-533, and Cys-535–Cys-546. The 231-residue stretch at 551 to 781 (APHRVNGKVS…GPVEVDSAPV (231 aa)) folds into the Nidogen G2 beta-barrel domain. Asn-681, Asn-716, and Asn-726 each carry an N-linked (GlcNAc...) asparagine glycan. In terms of domain architecture, EGF-like 2 spans 782–823 (GVNPCYDGSHTCDTTARCHPGTGVDYTCECTPGFQGDGRSCV). Cystine bridges form between Cys-786–Cys-799, Cys-793–Cys-809, Cys-811–Cys-822, Cys-828–Cys-841, Cys-835–Cys-850, Cys-852–Cys-865, Cys-875–Cys-890, Cys-882–Cys-900, Cys-902–Cys-913, Cys-919–Cys-930, Cys-924–Cys-939, Cys-941–Cys-952, Cys-968–Cys-991, Cys-1002–Cys-1009, Cys-1011–Cys-1033, Cys-1047–Cys-1071, Cys-1082–Cys-1089, and Cys-1091–Cys-1112. An EGF-like 3; calcium-binding domain is found at 824 to 862 (DVNECATGFHRCGPNSVCVNLVGSYRCECRSGYEFADDQ). The 44-residue stretch at 871–914 (PPNPCLDGSHTCAPEGQARCIHHGGSSFSCACLPGFIGTGHQCS) folds into the EGF-like 4 domain. The 39-residue stretch at 915–953 (DVDECAENRCHEAAICYNTPGSFSCRCQPGYRGDGFHCT) folds into the EGF-like 5; calcium-binding domain. Positions 946–948 (RGD) match the Cell attachment site motif. 2 Thyroglobulin type-1 domains span residues 965-1033 (LKPC…PPHC) and 1044-1112 (RTVC…RPAC). The interval 1021–1043 (GTQTPPGSTPPHCGPPPEPTQRP) is disordered. The segment covering 1027 to 1040 (GSTPPHCGPPPEPT) has biased composition (pro residues). An N-linked (GlcNAc...) asparagine glycan is attached at Asn-1152. LDL-receptor class B repeat units lie at residues 1182–1225 (RMVY…DHFR), 1226–1268 (RTMY…DPIR), 1269–1313 (GNLY…DPFS), 1314–1355 (KLLC…YADH), and 1357–1401 (YHTD…CPTG). An Omega-N-methylarginine modification is found at Arg-1336.

Interacts with LAMA2. Interacts with COL13A1. Interacts with EFEMP2. In terms of processing, highly N- and O-glycosylated.

The protein resides in the secreted. It localises to the extracellular space. It is found in the extracellular matrix. Its subcellular location is the basement membrane. Functionally, cell adhesion glycoprotein. Might be involved in osteoblast differentiation. It probably has a role in cell-extracellular matrix interactions. The sequence is that of Nidogen-2 (Nid2) from Mus musculus (Mouse).